A 398-amino-acid chain; its full sequence is Elongation factor Tu (398 aa).

A tr-type G domain is found at 10–207 (KPHVNIGTIG…TVDEYIPEPE (198 aa)). A G1 region spans residues 19 to 26 (GHVDHGKT). Residue 19-26 (GHVDHGKT) participates in GTP binding. Threonine 26 contacts Mg(2+). The interval 63 to 67 (GITIN) is G2. Residues 84 to 87 (DAPG) form a G3 region. Residues 84 to 88 (DAPGH) and 139 to 142 (NKVD) contribute to the GTP site. A G4 region spans residues 139-142 (NKVD). The segment at 177–179 (SAL) is G5.

It belongs to the TRAFAC class translation factor GTPase superfamily. Classic translation factor GTPase family. EF-Tu/EF-1A subfamily. As to quaternary structure, monomer.

It is found in the cytoplasm. The catalysed reaction is GTP + H2O = GDP + phosphate + H(+). Functionally, GTP hydrolase that promotes the GTP-dependent binding of aminoacyl-tRNA to the A-site of ribosomes during protein biosynthesis. This Streptococcus pneumoniae serotype 4 (strain ATCC BAA-334 / TIGR4) protein is Elongation factor Tu.